We begin with the raw amino-acid sequence, 494 residues long: Cobyric acid synthase (494 aa).

The GATase cobBQ-type domain occupies 252–444 (DLNIAVIRLP…LHGLFDNGPW (193 aa)). The Nucleophile role is filled by Cys333. Residue His436 is part of the active site.

It belongs to the CobB/CobQ family. CobQ subfamily.

The protein operates within cofactor biosynthesis; adenosylcobalamin biosynthesis. In terms of biological role, catalyzes amidations at positions B, D, E, and G on adenosylcobyrinic A,C-diamide. NH(2) groups are provided by glutamine, and one molecule of ATP is hydrogenolyzed for each amidation. This chain is Cobyric acid synthase, found in Nostoc punctiforme (strain ATCC 29133 / PCC 73102).